A 471-amino-acid polypeptide reads, in one-letter code: UTP--glucose-1-phosphate uridylyltransferase (471 aa).

UTP-binding positions include 87–90, K101, Q164, and G193; that span reads LNGG. 89 to 90 serves as a coordination point for substrate; it reads GG. Substrate contacts are provided by residues H194 and 222-224; that span reads NSD. Residues D224 and K362 each coordinate UTP.

This sequence belongs to the UDPGP type 1 family.

The protein localises to the cytoplasm. It catalyses the reaction alpha-D-glucose 1-phosphate + UTP + H(+) = UDP-alpha-D-glucose + diphosphate. Functionally, plays a central role as a glucosyl donor in cellular metabolic pathways. This is UTP--glucose-1-phosphate uridylyltransferase from Pyrus pyrifolia (Chinese pear).